A 416-amino-acid chain; its full sequence is Tiggy-winkle hedgehog protein (416 aa).

Residues 1-26 (MDVRLHLKQFALLCFISLLLTPCGLA) form the signal peptide. Residue Cys-27 is the site of N-palmitoyl cysteine attachment. Ca(2+)-binding residues include Glu-92, Glu-93, Asp-98, Thr-128, Glu-129, Asp-132, and Asp-134. Residues His-143, Asp-150, and His-185 each coordinate Zn(2+). Gly-200 is lipidated: Cholesterol glycine ester.

This sequence belongs to the hedgehog family. As to quaternary structure, multimer. In terms of assembly, interacts with HHATL/GUP1 which negatively regulates HHAT-mediated palmitoylation of the TWHH N-terminus. Interacts with BOC and CDON. Interacts with HHIP. Interacts with DISP1 via its cholesterol anchor. Interacts with SCUBE2. In terms of processing, the C-terminal domain displays an autoproteolysis activity and a cholesterol transferase activity. Both activities result in the cleavage of the full-length protein into two parts (N-product and C-product) followed by the covalent attachment of a cholesterol moiety to the C-terminal of the newly generated N-product. Cholesterylation is required for the tiggy-winkle hedgehog protein N-product targeting to lipid rafts and multimerization. N-product is the active species in both local and long-range signaling, whereas the C-product is degraded in the endoplasmic reticulum. N-palmitoylation by HHAT of N-product is required for tiggy-winkle hedgehog protein N-product multimerization and full activity. It is a prerequisite for the membrane-proximal positioning and the subsequent shedding of this N-terminal peptide. Post-translationally, the lipidated N- and C-terminal peptides of N-product can be cleaved (shedding). The N-terminal palmitoylated peptide is cleaved at the Cardin-Weintraub (CW) motif site. The cleavage reduced the interactions with heparan sulfate. The cleavage is enhanced by SCUBE2. As to expression, expressed in the ventral midline of the neural tube and brain. In the developing brain, expression occurs in domains that include a discrete region in the floor of the diencephalon. Not detected in the notochord or developing fin bud.

Its subcellular location is the cell membrane. The protein resides in the endoplasmic reticulum membrane. It localises to the golgi apparatus membrane. In terms of biological role, the C-terminal part of the tiggy-winkle hedgehog protein precursor displays an autoproteolysis and a cholesterol transferase activity. Both activities result in the cleavage of the full-length protein into two parts (N-product and C-product) followed by the covalent attachment of a cholesterol moiety to the C-terminal of the newly generated N-product. Both activities occur in the endoplasmic reticulum. Once cleaved, the C-product is degraded in the endoplasmic reticulum. The dually lipidated tiggy-winkle hedgehog protein N-product is a morphogen which is essential for a variety of patterning events during development. Involved in dorso-ventral patterning of the brain and in early patterning of the developing eyes. Binds to the patched (PTCH1) receptor, which functions in association with smoothened (SMO), to activate the transcription of target genes. The sequence is that of Tiggy-winkle hedgehog protein (shhb) from Danio rerio (Zebrafish).